A 1265-amino-acid chain; its full sequence is DNA-directed RNA polymerase subunit beta'' (1265 aa).

Residues C223, C297, C304, and C307 each contribute to the Zn(2+) site.

Belongs to the RNA polymerase beta' chain family. RpoC2 subfamily. As to quaternary structure, in plastids the minimal PEP RNA polymerase catalytic core is composed of four subunits: alpha, beta, beta', and beta''. When a (nuclear-encoded) sigma factor is associated with the core the holoenzyme is formed, which can initiate transcription. Zn(2+) is required as a cofactor.

It is found in the plastid. Its subcellular location is the cyanelle. The catalysed reaction is RNA(n) + a ribonucleoside 5'-triphosphate = RNA(n+1) + diphosphate. DNA-dependent RNA polymerase catalyzes the transcription of DNA into RNA using the four ribonucleoside triphosphates as substrates. This is DNA-directed RNA polymerase subunit beta'' from Cyanophora paradoxa.